Here is a 700-residue protein sequence, read N- to C-terminus: ATP-dependent zinc metalloprotease FtsH (700 aa).

Residues 1-10 (MNNNKGGFLR) lie on the Cytoplasmic side of the membrane. Residues 11-31 (SSVFYIFIFLAVVGMVYGLFG) traverse the membrane as a helical segment. The Extracellular segment spans residues 32 to 130 (NDKTTTKTIT…LVTKQAENSG (99 aa)). The helical transmembrane segment at 131 to 151 (FWLNLLVSLVPVLLIVAVFYL) threads the bilayer. Over 152–700 (MMNQAGGGKG…ETDDNNTENK (549 aa)) the chain is Cytoplasmic. An ATP-binding site is contributed by 227–234 (GPPGTGKT). H449 is a Zn(2+) binding site. Residue E450 is part of the active site. Zn(2+)-binding residues include H453 and D525. The tract at residues 644–700 (KSFEEAKAAADAKDSQAEQRFEKQDEEKSSDDHSESKNEDTDSTDKSETDDNNTENK) is disordered.

The protein in the central section; belongs to the AAA ATPase family. It in the C-terminal section; belongs to the peptidase M41 family. Homohexamer. It depends on Zn(2+) as a cofactor.

The protein resides in the cell membrane. Its function is as follows. Acts as a processive, ATP-dependent zinc metallopeptidase for both cytoplasmic and membrane proteins. Plays a role in the quality control of integral membrane proteins. In Leuconostoc mesenteroides subsp. mesenteroides (strain ATCC 8293 / DSM 20343 / BCRC 11652 / CCM 1803 / JCM 6124 / NCDO 523 / NBRC 100496 / NCIMB 8023 / NCTC 12954 / NRRL B-1118 / 37Y), this protein is ATP-dependent zinc metalloprotease FtsH.